We begin with the raw amino-acid sequence, 163 residues long: MARGGSFSRLRLRAGVVVAAAAAALLLFAVVAPPAAALNIGLQSAGDGASKAGLCSRTCESDHCTTPPLLRYGKYCGILYSGCPGEQPCDELDACCMHHDNCVQAKNDYLSTACNEELLECLARLREGSSTFQGNKCMIDEVIDVISLVIEAAVVAGRLLHKP.

Residues 1-43 (MARGGSFSRLRLRAGVVVAAAAAALLLFAVVAPPAAALNIGLQ) form the signal peptide. Cystine bridges form between Cys-55–Cys-83, Cys-59–Cys-89, Cys-64–Cys-137, Cys-76–Cys-96, Cys-95–Cys-121, and Cys-102–Cys-114. The Ca(2+) site is built by Tyr-75, Gly-77, and Tyr-80. His-99 is a catalytic residue. Asp-100 lines the Ca(2+) pocket.

The protein belongs to the phospholipase A2 family. Ca(2+) serves as cofactor.

It is found in the secreted. The catalysed reaction is a 1,2-diacyl-sn-glycero-3-phosphocholine + H2O = a 1-acyl-sn-glycero-3-phosphocholine + a fatty acid + H(+). Its activity is regulated as follows. Inhibited by EGTA. Functionally, PA2 catalyzes the calcium-dependent hydrolysis of the 2-acyl groups in 3-sn-phosphoglycerides. Releases lysophospholipids (LPLs) and free fatty acids (FFAs) from membrane phospholipids in response to hormones and other external stimuli. This is Phospholipase A2 homolog 3 (PLA2-III) from Oryza sativa subsp. japonica (Rice).